The primary structure comprises 270 residues: Glucosamine-6-phosphate deaminase (270 aa).

The Proton acceptor; for enolization step role is filled by aspartate 72. Aspartate 141 serves as the catalytic For ring-opening step. Catalysis depends on histidine 143, which acts as the Proton acceptor; for ring-opening step. The For ring-opening step role is filled by glutamate 148.

The protein belongs to the glucosamine/galactosamine-6-phosphate isomerase family. NagB subfamily. In terms of assembly, homohexamer.

It carries out the reaction alpha-D-glucosamine 6-phosphate + H2O = beta-D-fructose 6-phosphate + NH4(+). Its pathway is amino-sugar metabolism; N-acetylneuraminate degradation; D-fructose 6-phosphate from N-acetylneuraminate: step 5/5. Allosterically activated by N-acetylglucosamine 6-phosphate (GlcNAc6P). Functionally, catalyzes the reversible isomerization-deamination of glucosamine 6-phosphate (GlcN6P) to form fructose 6-phosphate (Fru6P) and ammonium ion. The polypeptide is Glucosamine-6-phosphate deaminase (Haemophilus influenzae (strain PittEE)).